The chain runs to 567 residues: Dihydroxy-acid dehydratase 3 (567 aa).

[2Fe-2S] cluster is bound at residue Cys57. Asp89 lines the Mg(2+) pocket. Residue Cys130 participates in [2Fe-2S] cluster binding. Mg(2+)-binding residues include Asp131 and Lys132. An N6-carboxylysine modification is found at Lys132. [2Fe-2S] cluster is bound at residue Cys202. Residue Glu454 coordinates Mg(2+). The Proton acceptor role is filled by Ser480.

This sequence belongs to the IlvD/Edd family. In terms of assembly, homodimer. [2Fe-2S] cluster serves as cofactor. It depends on Mg(2+) as a cofactor.

It catalyses the reaction (2R)-2,3-dihydroxy-3-methylbutanoate = 3-methyl-2-oxobutanoate + H2O. It carries out the reaction (2R,3R)-2,3-dihydroxy-3-methylpentanoate = (S)-3-methyl-2-oxopentanoate + H2O. It functions in the pathway amino-acid biosynthesis; L-isoleucine biosynthesis; L-isoleucine from 2-oxobutanoate: step 3/4. The protein operates within amino-acid biosynthesis; L-valine biosynthesis; L-valine from pyruvate: step 3/4. In terms of biological role, functions in the biosynthesis of branched-chain amino acids. Catalyzes the dehydration of (2R,3R)-2,3-dihydroxy-3-methylpentanoate (2,3-dihydroxy-3-methylvalerate) into 2-oxo-3-methylpentanoate (2-oxo-3-methylvalerate) and of (2R)-2,3-dihydroxy-3-methylbutanoate (2,3-dihydroxyisovalerate) into 2-oxo-3-methylbutanoate (2-oxoisovalerate), the penultimate precursor to L-isoleucine and L-valine, respectively. The polypeptide is Dihydroxy-acid dehydratase 3 (Aromatoleum aromaticum (strain DSM 19018 / LMG 30748 / EbN1) (Azoarcus sp. (strain EbN1))).